Here is a 111-residue protein sequence, read N- to C-terminus: Large ribosomal subunit protein uL22 (111 aa).

The protein belongs to the universal ribosomal protein uL22 family. In terms of assembly, part of the 50S ribosomal subunit.

Its function is as follows. This protein binds specifically to 23S rRNA; its binding is stimulated by other ribosomal proteins, e.g. L4, L17, and L20. It is important during the early stages of 50S assembly. It makes multiple contacts with different domains of the 23S rRNA in the assembled 50S subunit and ribosome. The globular domain of the protein is located near the polypeptide exit tunnel on the outside of the subunit, while an extended beta-hairpin is found that lines the wall of the exit tunnel in the center of the 70S ribosome. The polypeptide is Large ribosomal subunit protein uL22 (Xylella fastidiosa (strain M23)).